The primary structure comprises 199 residues: Pyridoxal 5'-phosphate synthase subunit PdxT (199 aa).

49-51 is a binding site for L-glutamine; the sequence is GES. Cysteine 81 functions as the Nucleophile in the catalytic mechanism. L-glutamine is bound by residues arginine 110 and 139–140; that span reads IR. Residues histidine 175 and glutamate 177 each act as charge relay system in the active site.

Belongs to the glutaminase PdxT/SNO family. In the presence of PdxS, forms a dodecamer of heterodimers. Only shows activity in the heterodimer.

It carries out the reaction aldehydo-D-ribose 5-phosphate + D-glyceraldehyde 3-phosphate + L-glutamine = pyridoxal 5'-phosphate + L-glutamate + phosphate + 3 H2O + H(+). The catalysed reaction is L-glutamine + H2O = L-glutamate + NH4(+). It functions in the pathway cofactor biosynthesis; pyridoxal 5'-phosphate biosynthesis. Its function is as follows. Catalyzes the hydrolysis of glutamine to glutamate and ammonia as part of the biosynthesis of pyridoxal 5'-phosphate. The resulting ammonia molecule is channeled to the active site of PdxS. This Frankia casuarinae (strain DSM 45818 / CECT 9043 / HFP020203 / CcI3) protein is Pyridoxal 5'-phosphate synthase subunit PdxT.